Consider the following 506-residue polypeptide: MTETTAHPVTTATGTDVRVRFCPSPTGTPHVGLIRTALFNWAYARHTGGKLVFRVEDTDAARDSEESYEQLIEALRWLEIDWDEGEGVGGPHAPYRQSQRTDLYLDVIRKLTESGHLYESYATAEEIEARNRAAGRDPKMGYDNFERDLTEAERQAFRDEGRSPALRLRVPDTDLSFDDLVRGTVTFPAGSFPDFVLVRPNGAPLYTLVNPVDDALMGITHVLRGEDLLSSTPRQIALYHALIDIGVADAIPRFGHLPYVMGEGNKKLSKRDPESNLFHHRDRGFIPEGLINYLALLGWSLTHDRDVFSRMEMVTAFDVADVTPAPARFDLKKAESLNGDHIRLLALDDFAQRLVPYLQAADVVGAELTHDEQRMLEAAAPLVQERMQLLGEAPDLLSFLFTTADALPYDDAAVQALKDDAAAVLAASRGALAGVPHTQWDIDLVQEVLQNTLITGMGMKPRLAYGPLRVAVSGRRISPPLFESMVLLGKDETIARLDRLAGMLGG.

The short motif at 23 to 33 is the 'HIGH' region element; it reads PSPTGTPHVGL. The 'KMSKS' region motif lies at 267 to 271; the sequence is KLSKR. Residue K270 coordinates ATP.

It belongs to the class-I aminoacyl-tRNA synthetase family. Glutamate--tRNA ligase type 1 subfamily. In terms of assembly, monomer.

It is found in the cytoplasm. It carries out the reaction tRNA(Glu) + L-glutamate + ATP = L-glutamyl-tRNA(Glu) + AMP + diphosphate. In terms of biological role, catalyzes the attachment of glutamate to tRNA(Glu) in a two-step reaction: glutamate is first activated by ATP to form Glu-AMP and then transferred to the acceptor end of tRNA(Glu). The chain is Glutamate--tRNA ligase from Clavibacter michiganensis subsp. michiganensis (strain NCPPB 382).